A 209-amino-acid polypeptide reads, in one-letter code: Uracil phosphoribosyltransferase (209 aa).

Residues Arg-79, Arg-104, and 131–139 (DPMLATGNS) contribute to the 5-phospho-alpha-D-ribose 1-diphosphate site. Residues Ile-194 and 199–201 (GDA) contribute to the uracil site. Asp-200 is a binding site for 5-phospho-alpha-D-ribose 1-diphosphate.

It belongs to the UPRTase family. The cofactor is Mg(2+).

The catalysed reaction is UMP + diphosphate = 5-phospho-alpha-D-ribose 1-diphosphate + uracil. It participates in pyrimidine metabolism; UMP biosynthesis via salvage pathway; UMP from uracil: step 1/1. Allosterically activated by GTP. In terms of biological role, catalyzes the conversion of uracil and 5-phospho-alpha-D-ribose 1-diphosphate (PRPP) to UMP and diphosphate. This Rhizobium leguminosarum bv. trifolii (strain WSM2304) protein is Uracil phosphoribosyltransferase.